The sequence spans 91 residues: Putative regulatory protein Tlet_1629 (91 aa).

Belongs to the RemA family.

The sequence is that of Putative regulatory protein Tlet_1629 from Pseudothermotoga lettingae (strain ATCC BAA-301 / DSM 14385 / NBRC 107922 / TMO) (Thermotoga lettingae).